Here is a 390-residue protein sequence, read N- to C-terminus: Probable NADH-dependent butanol dehydrogenase 2 (390 aa).

It belongs to the iron-containing alcohol dehydrogenase family.

It functions in the pathway alcohol metabolism; butanol biosynthesis. This chain is Probable NADH-dependent butanol dehydrogenase 2 (yugK), found in Bacillus subtilis (strain 168).